A 174-amino-acid polypeptide reads, in one-letter code: MTTIITVRKGGKVVMAGDGQVSLGQTVMKGNARKVRRIGKGEVIAGFAGATADAFTLLDRLEKKLEQYPGQLMRAAVELAKDWRTDKYLRNLEAMMLVADKSTTLAITGNGDVLEPEHGAIAIGSGGNYAFAAARAMMDTDKSAEEVARQSLDIAADICVYTNHNLVVETLDAE.

The active site involves Thr2. Na(+) contacts are provided by Ala156, Cys159, and Thr162.

It belongs to the peptidase T1B family. HslV subfamily. In terms of assembly, a double ring-shaped homohexamer of HslV is capped on each side by a ring-shaped HslU homohexamer. The assembly of the HslU/HslV complex is dependent on binding of ATP.

The protein resides in the cytoplasm. It catalyses the reaction ATP-dependent cleavage of peptide bonds with broad specificity.. With respect to regulation, allosterically activated by HslU binding. Protease subunit of a proteasome-like degradation complex believed to be a general protein degrading machinery. In Agrobacterium fabrum (strain C58 / ATCC 33970) (Agrobacterium tumefaciens (strain C58)), this protein is ATP-dependent protease subunit HslV.